The chain runs to 164 residues: Phosphopantetheine adenylyltransferase (164 aa).

Ser9 is a substrate binding site. Residues 9 to 10 (SF) and His17 each bind ATP. Lys41, Thr74, and Arg88 together coordinate substrate. ATP-binding positions include 89 to 91 (GVR), Glu99, and 124 to 130 (NSFVASS).

It belongs to the bacterial CoaD family. In terms of assembly, homohexamer. Mg(2+) is required as a cofactor.

It is found in the cytoplasm. It catalyses the reaction (R)-4'-phosphopantetheine + ATP + H(+) = 3'-dephospho-CoA + diphosphate. It functions in the pathway cofactor biosynthesis; coenzyme A biosynthesis; CoA from (R)-pantothenate: step 4/5. Functionally, reversibly transfers an adenylyl group from ATP to 4'-phosphopantetheine, yielding dephospho-CoA (dPCoA) and pyrophosphate. The protein is Phosphopantetheine adenylyltransferase of Lactobacillus helveticus (strain DPC 4571).